The primary structure comprises 295 residues: Deleted in azoospermia-like (295 aa).

Residues 1–10 (MSTANPETPN) are compositionally biased toward polar residues. The segment at 1-25 (MSTANPETPNSTISREASTQSSSAA) is disordered. Positions 11–25 (STISREASTQSSSAA) are enriched in low complexity. One can recognise an RRM domain in the interval 40–115 (NTVFVGGIDV…KKLKLGPAIR (76 aa)). The tract at residues 80–132 (KGYGFVSFFNDVDVQKIVESQINFHGKKLKLGPAIRKQNLCAYHVQPRPLVFN) is homodimerization. Positions 167–190 (AYPTYPNSPVQVITGYQLPVYNYQ) constitute a DAZ domain. Y276 is subject to Phosphotyrosine.

This sequence belongs to the RRM DAZ family. Homodimer and heterodimer. Multiple DAZL RRMs can bind to a single RNA containing multiple GUU triplets. Forms a heterodimer with DAZ. Interacts with BOLL, DAZAP1 and DAZAP2. Interacts with PUM2. As to expression, testis specific.

It is found in the cytoplasm. The protein resides in the nucleus. In terms of biological role, RNA-binding protein, which is essential for gametogenesis in both males and females. Plays a central role during spermatogenesis. Acts by binding to the 3'-UTR of mRNA, specifically recognizing GUU triplets, and thereby regulating the translation of key transcripts. In Homo sapiens (Human), this protein is Deleted in azoospermia-like (DAZL).